Here is a 179-residue protein sequence, read N- to C-terminus: Large ribosomal subunit protein uL6c (179 aa).

This sequence belongs to the universal ribosomal protein uL6 family. Part of the 50S ribosomal subunit.

It is found in the plastid. Its subcellular location is the cyanelle. In terms of biological role, binds 23S rRNA. This chain is Large ribosomal subunit protein uL6c (rpl6), found in Cyanophora paradoxa.